The following is a 57-amino-acid chain: Large ribosomal subunit protein bL32 (57 aa).

Belongs to the bacterial ribosomal protein bL32 family.

The polypeptide is Large ribosomal subunit protein bL32 (Bacillus licheniformis (strain ATCC 14580 / DSM 13 / JCM 2505 / CCUG 7422 / NBRC 12200 / NCIMB 9375 / NCTC 10341 / NRRL NRS-1264 / Gibson 46)).